The sequence spans 251 residues: Ditrans,polycis-undecaprenyl-diphosphate synthase ((2E,6E)-farnesyl-diphosphate specific) (251 aa).

Aspartate 20 is an active-site residue. A Mg(2+)-binding site is contributed by aspartate 20. Residues glycine 21 to arginine 24, tryptophan 25, arginine 33, histidine 37, and serine 65 to glutamate 67 contribute to the substrate site. Asparagine 68 (proton acceptor) is an active-site residue. Substrate-binding positions include tryptophan 69, arginine 71, arginine 188, and arginine 194 to serine 196. Glutamate 207 lines the Mg(2+) pocket.

This sequence belongs to the UPP synthase family. Homodimer. Mg(2+) is required as a cofactor.

The catalysed reaction is 8 isopentenyl diphosphate + (2E,6E)-farnesyl diphosphate = di-trans,octa-cis-undecaprenyl diphosphate + 8 diphosphate. Catalyzes the sequential condensation of isopentenyl diphosphate (IPP) with (2E,6E)-farnesyl diphosphate (E,E-FPP) to yield (2Z,6Z,10Z,14Z,18Z,22Z,26Z,30Z,34E,38E)-undecaprenyl diphosphate (di-trans,octa-cis-UPP). UPP is the precursor of glycosyl carrier lipid in the biosynthesis of bacterial cell wall polysaccharide components such as peptidoglycan and lipopolysaccharide. The protein is Ditrans,polycis-undecaprenyl-diphosphate synthase ((2E,6E)-farnesyl-diphosphate specific) of Vibrio parahaemolyticus serotype O3:K6 (strain RIMD 2210633).